A 309-amino-acid polypeptide reads, in one-letter code: Malate dehydrogenase (309 aa).

Residues Gly-8–Gly-13 and Asp-33 each bind NAD(+). Substrate is bound by residues Arg-82 and Arg-88. Residues Asn-95 and Val-118 to Asn-120 contribute to the NAD(+) site. Substrate is bound by residues Asn-120 and Arg-151. The active-site Proton acceptor is the His-175.

It belongs to the LDH/MDH superfamily. MDH type 3 family.

The enzyme catalyses (S)-malate + NAD(+) = oxaloacetate + NADH + H(+). Catalyzes the reversible oxidation of malate to oxaloacetate. This is Malate dehydrogenase from Pseudomonas putida (strain GB-1).